The sequence spans 144 residues: Small ribosomal subunit protein bS6 (144 aa).

The interval 99–144 (KASPLAPCEEKGEEGKAEDAADELTTFGMADDDDLGDDDDTVEAGI) is disordered. Residues 106 to 117 (CEEKGEEGKAED) show a composition bias toward basic and acidic residues. Residues 128–144 (ADDDDLGDDDDTVEAGI) show a composition bias toward acidic residues.

Belongs to the bacterial ribosomal protein bS6 family.

Its function is as follows. Binds together with bS18 to 16S ribosomal RNA. The polypeptide is Small ribosomal subunit protein bS6 (Magnetococcus marinus (strain ATCC BAA-1437 / JCM 17883 / MC-1)).